Here is a 240-residue protein sequence, read N- to C-terminus: Small ribosomal subunit protein uS3 (240 aa).

The KH type-2 domain maps to 39-109 (IRQHIDANLN…QIRINVVEVN (71 aa)). The tract at residues 216–240 (TSAANAAPLPRRKSRRQQFEDRSEQ) is disordered.

This sequence belongs to the universal ribosomal protein uS3 family. As to quaternary structure, part of the 30S ribosomal subunit. Forms a tight complex with proteins S10 and S14.

Functionally, binds the lower part of the 30S subunit head. Binds mRNA in the 70S ribosome, positioning it for translation. This Picosynechococcus sp. (strain ATCC 27264 / PCC 7002 / PR-6) (Agmenellum quadruplicatum) protein is Small ribosomal subunit protein uS3.